We begin with the raw amino-acid sequence, 35 residues long: MYDPPFLEALMITASFFAIFIIIVVSVLLLEGEGD.

Residues 10–30 (LMITASFFAIFIIIVVSVLLL) form a helical membrane-spanning segment.

The protein resides in the membrane. This is an uncharacterized protein from Salmonella paratyphi A (strain ATCC 9150 / SARB42).